Consider the following 444-residue polypeptide: Pestheic acid cluster transcriptional regulator 2 (444 aa).

Polar residues predominate over residues 1-22; that stretch reads MEAADPNNNLTITSPSTLLSNP. The segment at 1 to 31 is disordered; sequence MEAADPNNNLTITSPSTLLSNPTQPPAQPLK. The zn(2)-C6 fungal-type DNA-binding region spans 36-63; it reads CHACASSKVKCHKEKPTCSRCRKRGITC. Residues 326 to 348 are disordered; sequence ARVGSGVSTHTTAGQYEPQVEQQ. A compositionally biased stretch (polar residues) spans 331 to 348; it reads GVSTHTTAGQYEPQVEQQ.

It localises to the nucleus. Transcription factor that, with ptaR1 and ptaR3, coregulates the expression of the gene cluster that mediates the biosynthesis of pestheic acid, a diphenyl ether which is a biosynthetic precursor of the unique chloropupukeananes. In Pestalotiopsis fici (strain W106-1 / CGMCC3.15140), this protein is Pestheic acid cluster transcriptional regulator 2.